Here is a 278-residue protein sequence, read N- to C-terminus: N-terminal Xaa-Pro-Lys N-methyltransferase 2 (278 aa).

Residues Gly-123, Arg-128, Asp-145, 174–175 (LQ), Gln-190, and His-195 contribute to the S-adenosyl-L-methionine site.

Belongs to the methyltransferase superfamily. NTM1 family.

The protein localises to the nucleus. It carries out the reaction N-terminal L-alanyl-L-prolyl-L-lysyl-[protein] + S-adenosyl-L-methionine = N-terminal N-methyl-L-alanyl-L-prolyl-L-lysyl-[protein] + S-adenosyl-L-homocysteine + H(+). It catalyses the reaction N-terminal L-prolyl-L-prolyl-L-lysyl-[protein] + S-adenosyl-L-methionine = N-terminal N-methyl-L-prolyl-L-prolyl-L-lysyl-[protein] + S-adenosyl-L-homocysteine + H(+). The enzyme catalyses N-terminal L-seryl-L-prolyl-L-lysyl-[protein] + S-adenosyl-L-methionine = N-terminal N-methyl-L-seryl-L-prolyl-L-lysyl-[protein] + S-adenosyl-L-homocysteine + H(+). In terms of biological role, alpha N-methyltransferase that methylates the N-terminus of target proteins containing the N-terminal motif [Ala/Pro/Ser]-Pro-Lys when the initiator Met is cleaved. Specifically catalyzes monomethylation of exposed alpha-amino group of Ala or Ser residue in the [Ala/Ser]-Pro-Lys motif and Pro in the Pro-Pro-Lys motif. Predominantly functions as a mono-methyltransferase but is also able to di-/tri-methylate the GPKRIA peptide and di-methylate the PPKRIA peptide (in vitro). May activate NTMT1 by priming its substrates for trimethylation. The polypeptide is N-terminal Xaa-Pro-Lys N-methyltransferase 2 (ntmt2) (Danio rerio (Zebrafish)).